We begin with the raw amino-acid sequence, 2130 residues long: Highly reducing polyketide synthase anuA (2130 aa).

One can recognise a Ketosynthase family 3 (KS3) domain in the interval 1–213 (MKAGVLSGTS…GANCHVILEQ (213 aa)). In terms of domain architecture, Malonyl-CoA:ACP transacylase (MAT) spans 317–644 (FVFTGQGSQW…SFAGNLWLKG (328 aa)). An N-terminal hotdog fold region spans residues 701–836 (HELLGSLLTG…GSIAIHPRNA (136 aa)). One can recognise a PKS/mFAS DH domain in the interval 701–1000 (HELLGSLLTG…LSPYQSTSQA (300 aa)). The active-site Proton acceptor; for dehydratase activity is histidine 733. Residues 849–1000 (LESTAKRTWY…LSPYQSTSQA (152 aa)) form a C-terminal hotdog fold region. The Proton donor; for dehydratase activity role is filled by aspartate 914. One can recognise an Enoyl reductase (ER) domain in the interval 1405 to 1722 (GQLDTIYFQQ…SRSRIGKVAI (318 aa)). Positions 1747-1927 (SYVMVGCLGG…AVAVGLGMIS (181 aa)) constitute a Ketoreductase (KR) domain. Residues 2047 to 2125 (TLDEAVLDHI…SLRDLAMTSL (79 aa)) enclose the Carrier domain. Serine 2084 bears the O-(pantetheine 4'-phosphoryl)serine mark.

The cofactor is pantetheine 4'-phosphate.

It participates in secondary metabolite biosynthesis. Its function is as follows. Highly reducing polyketide synthase; part of the gene cluster that mediates the biosynthesis of annullatin D, an alkylated aromatic polyketide with a fused dihydrobenzofuran lactone ring system that exhibits potent agonistic activities toward the cannabinoid receptors. The annullatin backbone 2-hydroxymethyl-3-pentylphenol is assembled from one acetyl-CoA starter unit and 5 malonyl-CoA elongation units by cooperation of the highly reducing polyketide synthase anuA, the short-chain dehydrogenase anuB and the oxidoreductase anuC, before being hydroxylated at the C-5 alkyl chain by the cytochrome P450 monooxygenase anuE to form (8S)-annullatin E. The prenyltransferase anuH subsequently installs one isoprenyl group at the benzene ring to form (8S)-annullatin J. Enzymatic or nonenzymatic dihydro-benzofuran ring formation between the prenyl and the phenolic hydroxyl groups in (8S)-annullatin J results in two diastereomers (2S,9S)-annullatin H and compound 12. The intermediate (2S,9S)-annullatin H is then converted to (2S,9S)-annullatin D by the FAD-linked oxidoreductase anuG-catalyzed five-member lactone ring formation. The isomer 12 acts as a substrate for the short-chain dehydrogenase anuF and is oxidized to (2R)-annullatin F, which is subsequently acetylated by an acetyltransferase leading to (2R)-annullatin G formation. The remaining enzymes identified within the cluster, anuD, anuI and anuJ, seem not to be involved in annullatin biosynthesis. This is Highly reducing polyketide synthase anuA from Penicillium roqueforti (strain FM164).